Reading from the N-terminus, the 686-residue chain is MASNSHNNYNTPRRQNYDVPKAWEEDSLYENIDFLTQPAVSSDTSEDEEPLLSVARRVEVQGVNPGLKPRGLVRPRQDADNPSSDEGFDWELWKLHLSTRAFSFLEPPRLSSSNTASGLRSSCSDFTILGSSGVNPTSHANLSEEEMYEEIPPLASNPSDERHPRQLSGAVAQGAIRKSPRKLKFKPAKFKGLSSSLLNPFTASDSGRRARRQTPTCQPGFTPIFQDLGEPHYVKACTVFFEGCMAAGKTTLLNFARQTLSDDEALTIPEPMRFWTEVYTNVLSQIVKINKECKPGKTSTTAELVSCQLKFATPLKTQSLFLQRSVKKDSEMQPVGPLDKWVIVDRHQLSALVVFPLVLMRRGMLSFSDFFNLLGMFEAHPGEVIALMSVNVEENFTRLKKRGRVCERHIDRDYIKEIKGSFNAAYCAWLFLQYFSIQTTMQICMGLSSLDEACATEGVCHTTASRIWNNRMLVTLSDIISQFSNDYTVQNVCYNFFSQLSTLKFVVIDLSAFRHDVPGAWGEFYMQVMKNGDIKTRVMDFTAIKALADTAHNTHLRSISFSSSQVFSTMLFLILLCVTGAQAITTPAPPRPATTTPRRGVTSAPLIVPASSSELIVTLDGTFHSVTIDMTEIRQYVRQEIIEALWNASHVFESLETTYNRYKDVYRFTDQSIRVNTRGSCQLVKK.

The segment covering 1-14 (MASNSHNNYNTPRR) has biased composition (polar residues). 2 disordered regions span residues 1–21 (MASNSHNNYNTPRRQNYDVPK) and 64–85 (NPGLKPRGLVRPRQDADNPSSD). 243–250 (GCMAAGKT) serves as a coordination point for ATP. The Proton acceptor role is filled by Glu270. Gln308 contributes to the substrate binding site. Arg398 serves as a coordination point for ATP. Arg404 is a binding site for substrate.

The protein belongs to the herpesviridae thymidine kinase family. As to quaternary structure, homodimer.

It catalyses the reaction thymidine + ATP = dTMP + ADP + H(+). Its function is as follows. Catalyzes the transfer of the gamma-phospho group of ATP to thymidine to generate dTMP in the salvage pathway of pyrimidine synthesis. The dTMP serves as a substrate for DNA polymerase during viral DNA replication. Allows the virus to be reactivated and to grow in non-proliferative cells lacking a high concentration of phosphorylated nucleic acid precursors. This chain is Thymidine kinase, found in Alcelaphine herpesvirus 1 (strain WC11) (AlHV-1).